The chain runs to 80 residues: Large ribosomal subunit protein bL31B (80 aa).

The protein belongs to the bacterial ribosomal protein bL31 family. Type B subfamily. As to quaternary structure, part of the 50S ribosomal subunit.

The sequence is that of Large ribosomal subunit protein bL31B from Streptococcus sanguinis (strain SK36).